The sequence spans 104 residues: Colipase-like protein 2 (104 aa).

The first 19 residues, 1-19, serve as a signal peptide directing secretion; that stretch reads MAFTQALVTVLAFLVGTLP. Intrachain disulfides connect Cys-38–Cys-49, Cys-44–Cys-60, Cys-48–Cys-82, Cys-70–Cys-90, and Cys-84–Cys-101.

Belongs to the colipase family.

Its subcellular location is the secreted. In Rattus norvegicus (Rat), this protein is Colipase-like protein 2 (Clpsl2).